The primary structure comprises 307 residues: Probable thioesterase KK1J (307 aa).

It belongs to the AMT4 thioesterase family.

The protein operates within secondary metabolite biosynthesis. Functionally, probable thioesterase; part of the gene cluster that mediates the biosynthesis of KK-1, a novel cyclic depsipeptide with 10 residues which is a promising active compound with high activity against many plant pathogens, especially Botrytis cinerea. Within the pathway, kk1J is not essential for the biosynthesis of KK-1, but plays a role for efficient production via correction of peptide chain synthesis by kk1B. The nonribosomal peptide synthetase (NRPS) kk1B catalyzes the elongation and cyclization of the decapeptide chain composed of 1 D-lactic acid residue (D-Lac), 1 pipecolic acid residue (Pip), 1 aspartic acid residue (Asp), 1 isoleucine residue (Ile), 1 glycine residue (Gly), 1 tyrosine residue (Tyr) and 4 valine residues (Val). The Asp, Ile and 3 Val residues are N-methylated by the 5 methyltransferase domains from the NRPS (found in modules 3, 5, 6, 7 and 9), whereas the Tyr residue is O-methylated by the cluster encoded O-methyltransferase kk1A. The thioesterase kk1J is likely to be involved in the corrective mechanism of peptide chain synthesis. The D-lactate dehydrogenase kk1H is involved in the synthesis of D-lactic acid from pyruvic acid, which is recognized by the A domain of the first kk1B module. The pyrroline-5-carboxylate reductase kk1I is involved in the synthesis of the L-pipecolic acid residue of KK-1 from delta-1-pyrroline-5-carboxylate (P5C), a metabolic intermediate of lysine. It still is unclear how kk1C and kk1D are involved in the production of KK-1. This is Probable thioesterase KK1J from Curvularia clavata.